The sequence spans 368 residues: Germination protease (368 aa).

A propeptide spanning residues 1–16 is cleaved from the precursor; sequence MKNNELDVNQFLIRTD.

This sequence belongs to the peptidase A25 family. As to quaternary structure, homotetramer. Post-translationally, autoproteolytically processed. The inactive tetrameric zymogen termed p46 autoprocesses to a smaller form termed p41, which is active only during spore germination.

It carries out the reaction Endopeptidase action with P4 Glu or Asp, P1 preferably Glu &gt; Asp, P1' hydrophobic and P2' Ala.. Its function is as follows. Initiates the rapid degradation of small, acid-soluble proteins during spore germination. The protein is Germination protease of Bacillus velezensis (strain DSM 23117 / BGSC 10A6 / LMG 26770 / FZB42) (Bacillus amyloliquefaciens subsp. plantarum).